A 207-amino-acid polypeptide reads, in one-letter code: Large ribosomal subunit protein uL4 (207 aa).

The segment at 49 to 79 (HKVKSRGEVSGGGKKPWRQKGTGRARAGTSR) is disordered.

Belongs to the universal ribosomal protein uL4 family. Part of the 50S ribosomal subunit.

Its function is as follows. One of the primary rRNA binding proteins, this protein initially binds near the 5'-end of the 23S rRNA. It is important during the early stages of 50S assembly. It makes multiple contacts with different domains of the 23S rRNA in the assembled 50S subunit and ribosome. Functionally, forms part of the polypeptide exit tunnel. This chain is Large ribosomal subunit protein uL4, found in Heliobacterium modesticaldum (strain ATCC 51547 / Ice1).